The sequence spans 1021 residues: Outer capsid protein P3 (1021 aa).

The protein belongs to the phytoreovirus inner capsid protein P3 family. As to quaternary structure, homodimer. Homomultimer.

It is found in the virion. Its subcellular location is the host cytoplasm. In terms of biological role, capsid protein which self-assembles to form the inner icosahedral capsid with a T=2 symmetry, and consisting of 60 P3 dimers. The polypeptide is Outer capsid protein P3 (Nephotettix cincticeps (Green rice leafhopper)).